Here is a 79-residue protein sequence, read N- to C-terminus: Cytochrome b (79 aa).

3 helical membrane passes run threonine 1–methionine 7, tryptophan 31–isoleucine 52, and tryptophan 67–alanine 79. Positions 37 and 51 each coordinate heme b.

Belongs to the cytochrome b family. In terms of assembly, the cytochrome bc1 complex contains 11 subunits: 3 respiratory subunits (MT-CYB, CYC1 and UQCRFS1), 2 core proteins (UQCRC1 and UQCRC2) and 6 low-molecular weight proteins (UQCRH/QCR6, UQCRB/QCR7, UQCRQ/QCR8, UQCR10/QCR9, UQCR11/QCR10 and a cleavage product of UQCRFS1). This cytochrome bc1 complex then forms a dimer. Heme b is required as a cofactor.

Its subcellular location is the mitochondrion inner membrane. Component of the ubiquinol-cytochrome c reductase complex (complex III or cytochrome b-c1 complex) that is part of the mitochondrial respiratory chain. The b-c1 complex mediates electron transfer from ubiquinol to cytochrome c. Contributes to the generation of a proton gradient across the mitochondrial membrane that is then used for ATP synthesis. The polypeptide is Cytochrome b (MT-CYB) (Corcorax melanoramphos (White-winged chough)).